The primary structure comprises 88 residues: Small ribosomal subunit protein bS20 (88 aa).

It belongs to the bacterial ribosomal protein bS20 family.

Functionally, binds directly to 16S ribosomal RNA. The sequence is that of Small ribosomal subunit protein bS20 from Rhodospirillum rubrum (strain ATCC 11170 / ATH 1.1.1 / DSM 467 / LMG 4362 / NCIMB 8255 / S1).